Here is a 344-residue protein sequence, read N- to C-terminus: MAPEEDSLALAEAWNHGFGFIKTSIVKTAVELEIPDILESRGAPVSIPELATAVDCSADRIYRVMRFLAYHGIFKRTKPPPESTEGGSVYYAQTPVSRRLTRENLGPFVLLQGTMREPSGCVTAETLRTSKRPGVVNENESDHLYEDPVFSMKVFRDAMASHARMTTAAVIENYGEGFQGVGSLVDVGGSYGMALSMLVKAFPWLRGICFDLPEVVARASPLKGVEFVGGTMFESIPKADVVMLMFVLHNWSDEECVEILKRCKDAVSKDKGKVIIIDAVIDEDGDGDEFTGARLGLDVTMMATMFEGRERTYVEWARIINEAGFRRHVVKNIKTLESVIEAYP.

Position 211 (D211) interacts with S-adenosyl-L-methionine. Residue H249 is the Proton acceptor of the active site.

Belongs to the class I-like SAM-binding methyltransferase superfamily. Cation-independent O-methyltransferase family. Homodimer.

It catalyses the reaction apigenin + S-adenosyl-L-methionine = genkwanin + S-adenosyl-L-homocysteine + H(+). The enzyme catalyses luteolin + S-adenosyl-L-methionine = luteolin 7-methyl ether + S-adenosyl-L-homocysteine + H(+). It carries out the reaction quercetin + S-adenosyl-L-methionine = rhamnetin + S-adenosyl-L-homocysteine + H(+). The catalysed reaction is (2S)-naringenin + S-adenosyl-L-methionine = (2S)-sakuranetin + S-adenosyl-L-homocysteine + H(+). It catalyses the reaction kaempferol + S-adenosyl-L-methionine = kaempferol 7-methyl ether + S-adenosyl-L-homocysteine + H(+). The enzyme catalyses isorhamnetin + S-adenosyl-L-methionine = rhamnacene + S-adenosyl-L-homocysteine + H(+). It carries out the reaction 4',7,8-trihydroxyflavone + S-adenosyl-L-methionine = 4',8-dihydroxy-7-methoxyflavone + S-adenosyl-L-homocysteine. The catalysed reaction is scutellarein + S-adenosyl-L-methionine = scutellarein 7-methyl ether + S-adenosyl-L-homocysteine. Its pathway is flavonoid metabolism. In terms of biological role, flavonoid 7-O-methyltransferase involved in the biosynthesis of polymethoxylated flavonoids natural products such as pebrellin, aroma compounds which contribute to the flavor of peppermint, and exhibit pharmacological activities such as anti-allergic, anti-oxidant, antibacterial, anti-proliferative, and anti-inflammatory effects. Catalyzes S-adenosylmethionine-dependent regioselective 7-O-methylation of flavonoids; active on various hydroxylated flavonoid substrates, including luteolin (LUT), quercetin, kaempferol, isorhamnetin, apigenin (API), scutellarein (6-hydroxy-apigenin, 6-OH-API, SCU), 7,8,4'-trihydroxy-flavone and naringenin (NAR), and, with a lower efficiency, 7,8,3',4'-tetrahydroxy-flavone, taxifolin, hesperetin and genistein. The protein is Flavonoid 7-O-methyltransferase 1A of Mentha piperita (Peppermint).